Consider the following 303-residue polypeptide: Probable cat1 operon transcriptional activator (303 aa).

Residues 1–58 enclose the HTH lysR-type domain; that stretch reads MDLRQFRYFVAVARERNFTRAARQLNIAQPPLSRQIQLLEEEVGVPLLIRNSRPVQLT. A DNA-binding region (H-T-H motif) is located at residues 18–37; it reads FTRAARQLNIAQPPLSRQIQ.

The protein belongs to the LysR transcriptional regulatory family.

Probable positive regulator of the cat1 operon which encode enzymes responsible for the degradation of catechol to acetyl-CoA via the beta-ketoadipate pathway. The sequence is that of Probable cat1 operon transcriptional activator from Acinetobacter lwoffii.